Here is a 955-residue protein sequence, read N- to C-terminus: 2-oxoglutarate dehydrogenase E1 component (955 aa).

Belongs to the alpha-ketoglutarate dehydrogenase family. As to quaternary structure, homodimer. Part of the 2-oxoglutarate dehydrogenase (OGDH) complex composed of E1 (2-oxoglutarate dehydrogenase), E2 (dihydrolipoamide succinyltransferase) and E3 (dihydrolipoamide dehydrogenase); the complex contains multiple copies of the three enzymatic components (E1, E2 and E3). Requires thiamine diphosphate as cofactor.

It carries out the reaction N(6)-[(R)-lipoyl]-L-lysyl-[protein] + 2-oxoglutarate + H(+) = N(6)-[(R)-S(8)-succinyldihydrolipoyl]-L-lysyl-[protein] + CO2. Functionally, E1 component of the 2-oxoglutarate dehydrogenase (OGDH) complex which catalyzes the decarboxylation of 2-oxoglutarate, the first step in the conversion of 2-oxoglutarate to succinyl-CoA and CO(2). This Bacillus cereus (strain G9842) protein is 2-oxoglutarate dehydrogenase E1 component.